Reading from the N-terminus, the 304-residue chain is Homoserine kinase (304 aa).

90–100 (PLARGLGSSAS) is an ATP binding site.

This sequence belongs to the GHMP kinase family. Homoserine kinase subfamily.

It is found in the cytoplasm. The catalysed reaction is L-homoserine + ATP = O-phospho-L-homoserine + ADP + H(+). It functions in the pathway amino-acid biosynthesis; L-threonine biosynthesis; L-threonine from L-aspartate: step 4/5. Its function is as follows. Catalyzes the ATP-dependent phosphorylation of L-homoserine to L-homoserine phosphate. The polypeptide is Homoserine kinase (Staphylococcus aureus (strain JH9)).